The sequence spans 228 residues: Adapter protein MecA (228 aa).

The protein belongs to the MecA family. Homodimer.

In terms of biological role, enables the recognition and targeting of unfolded and aggregated proteins to the ClpC protease or to other proteins involved in proteolysis. The chain is Adapter protein MecA from Lacticaseibacillus paracasei (strain ATCC 334 / BCRC 17002 / CCUG 31169 / CIP 107868 / KCTC 3260 / NRRL B-441) (Lactobacillus paracasei).